The following is a 177-amino-acid chain: Large ribosomal subunit protein uL5c (177 aa).

This sequence belongs to the universal ribosomal protein uL5 family. As to quaternary structure, part of the 50S ribosomal subunit; contacts the 5S rRNA.

Its subcellular location is the plastid. It localises to the chloroplast. Functionally, binds 5S rRNA, forms part of the central protuberance of the 50S subunit. The protein is Large ribosomal subunit protein uL5c (rpl5) of Cyanidioschyzon merolae (strain NIES-3377 / 10D) (Unicellular red alga).